Reading from the N-terminus, the 896-residue chain is MPGKEAAVNVMQSSTKSNTKKMVQARLPFKRLNPVPKDEGCLEEKKVRITKNVSPQKMLHSLNSSMEDMENDCDMETETVPIPKAVNGKGPLDNYIRKAPKVSHAPSITTIDLTEESNISISNDCPLNGESETHLANGTLALEESTPNLPLSAKEECTVSLENKTVENTHFSELKSDQLHQAAATSTSASNFSPERVVKEDCNSSADDDSASVSSSSSPVSLSSPDAQTGSQFRNRSSPSTSTTPTGKVTANKTSADKNKTKDKDKQRQAEKEERERAKKEARSAKKKKRQGLLKNLQRKRGKTSESSGKEYKKEKKEREDKEKAEKMKLKEEKKREKLEALEAKQEEKRKKDEEKRQKEEEKRQKEEEKRLKEEEKRVKAEKAEITRFFQKPKTPQAPKTFSRSCGKFAPFEIKKGMALAPLCRIDFEPEASEELDRFLQEQNSKIYFFDEIKKRKPRKMGQTTVPTVNSFEVDDVQVLGESDPVLGSNMLEGHIKDIGVPERKKFGRMKLLQFCENHRPAYWGTCNRRSRVINSRKPWAQDTGMLDYEVDSDEEWEEEEPGESLSHSEGENDDDPKEDDEDDDGFFVPHGYLSDDEGVSDEECTDPENQKFRQKLKAKEWYELQTNGKKIRAMQPVVIGCVWWDSKASEISLLQKFSACILESPAVDEELAQEISSAQSLKDRQILSKLVPLLHGNVNGSKIMIQEFQEYCRRGLFLEDNASDAAGNESTSPNVTPQTPSNIIVPSKARLKRLISENSVYEKRPDHRMCWYVHSDVLKGLQQDNLPVPCQWTYITQVNSVAKEDNGANGGSLQSLPLSGKRKSAGSMPITKFMKRAKDLETAINTDMDGFQADNEEDDDDCMILEDQQAKDAEDSTIECKINLNDSAVLASCQN.

3 disordered regions span residues 1-23 (MPGKEAAVNVMQSSTKSNTKKMV), 185-377 (TSTS…EEEK), and 552-610 (DSDE…DPEN). Over residues 10–21 (VMQSSTKSNTKK) the composition is skewed to polar residues. Low complexity predominate over residues 211 to 226 (ASVSSSSSPVSLSSPD). Residues 227–236 (AQTGSQFRNR) show a composition bias toward polar residues. A compositionally biased stretch (low complexity) spans 237-246 (SSPSTSTTPT). The segment covering 255-284 (SADKNKTKDKDKQRQAEKEERERAKKEARS) has biased composition (basic and acidic residues). Residues 285 to 302 (AKKKKRQGLLKNLQRKRG) show a composition bias toward basic residues. Basic and acidic residues predominate over residues 308–377 (SGKEYKKEKK…EEKRLKEEEK (70 aa)). 3 stretches are compositionally biased toward acidic residues: residues 552-563 (DSDEEWEEEEPG), 572-586 (ENDDDPKEDDEDDDG), and 595-607 (SDDEGVSDEECTD). The necessary for homodimerization, competence for chromatin assembly stretch occupies residues 642–678 (CVWWDSKASEISLLQKFSACILESPAVDEELAQEISS). Residues 724–743 (SDAAGNESTSPNVTPQTPSN) are disordered. Positions 729–743 (NESTSPNVTPQTPSN) are enriched in polar residues.

This sequence belongs to the CHAF1A family. Homodimer.

Its subcellular location is the nucleus. Involved in chromatin assembly in DNA replication and DNA repair. In Xenopus laevis (African clawed frog), this protein is Chromatin assembly factor 1 subunit A-A (chaf1a-a).